Reading from the N-terminus, the 173-residue chain is Large ribosomal subunit protein uL10 (173 aa).

It belongs to the universal ribosomal protein uL10 family. As to quaternary structure, part of the ribosomal stalk of the 50S ribosomal subunit. The N-terminus interacts with L11 and the large rRNA to form the base of the stalk. The C-terminus forms an elongated spine to which L12 dimers bind in a sequential fashion forming a multimeric L10(L12)X complex.

Functionally, forms part of the ribosomal stalk, playing a central role in the interaction of the ribosome with GTP-bound translation factors. In Acidithiobacillus ferrooxidans (strain ATCC 23270 / DSM 14882 / CIP 104768 / NCIMB 8455) (Ferrobacillus ferrooxidans (strain ATCC 23270)), this protein is Large ribosomal subunit protein uL10.